A 115-amino-acid chain; its full sequence is Phosphoribosyl-AMP cyclohydrolase (115 aa).

A Mg(2+)-binding site is contributed by aspartate 80. Zn(2+) is bound at residue cysteine 81. Residues aspartate 82 and aspartate 84 each contribute to the Mg(2+) site. Zn(2+) contacts are provided by cysteine 97 and cysteine 104.

It belongs to the PRA-CH family. Homodimer. It depends on Mg(2+) as a cofactor. The cofactor is Zn(2+).

It localises to the cytoplasm. It carries out the reaction 1-(5-phospho-beta-D-ribosyl)-5'-AMP + H2O = 1-(5-phospho-beta-D-ribosyl)-5-[(5-phospho-beta-D-ribosylamino)methylideneamino]imidazole-4-carboxamide. It participates in amino-acid biosynthesis; L-histidine biosynthesis; L-histidine from 5-phospho-alpha-D-ribose 1-diphosphate: step 3/9. Catalyzes the hydrolysis of the adenine ring of phosphoribosyl-AMP. The protein is Phosphoribosyl-AMP cyclohydrolase of Mycobacterium bovis (strain ATCC BAA-935 / AF2122/97).